The primary structure comprises 440 residues: tRNA modification GTPase MnmE (440 aa).

(6S)-5-formyl-5,6,7,8-tetrahydrofolate-binding residues include Arg-34, Glu-94, and Arg-134. Residues 229–367 (GVRVVLAGPP…LVALLLDRAA (139 aa)) form the TrmE-type G domain. Asn-239 contributes to the K(+) binding site. GTP contacts are provided by residues 239–244 (NAGKST), 258–264 (TPIAGTT), 283–286 (DTAG), and 348–350 (SAR). Ser-243 contributes to the Mg(2+) binding site. Residues Thr-258, Ile-260, and Thr-263 each coordinate K(+). Mg(2+) is bound at residue Thr-264. Lys-440 contributes to the (6S)-5-formyl-5,6,7,8-tetrahydrofolate binding site.

This sequence belongs to the TRAFAC class TrmE-Era-EngA-EngB-Septin-like GTPase superfamily. TrmE GTPase family. Homodimer. Heterotetramer of two MnmE and two MnmG subunits. The cofactor is K(+).

The protein resides in the cytoplasm. In terms of biological role, exhibits a very high intrinsic GTPase hydrolysis rate. Involved in the addition of a carboxymethylaminomethyl (cmnm) group at the wobble position (U34) of certain tRNAs, forming tRNA-cmnm(5)s(2)U34. This chain is tRNA modification GTPase MnmE, found in Rhizorhabdus wittichii (strain DSM 6014 / CCUG 31198 / JCM 15750 / NBRC 105917 / EY 4224 / RW1) (Sphingomonas wittichii).